Consider the following 266-residue polypeptide: tRNA pseudouridine synthase A (266 aa).

The active-site Nucleophile is the Asp51. Tyr106 is a substrate binding site.

It belongs to the tRNA pseudouridine synthase TruA family.

It catalyses the reaction uridine(38/39/40) in tRNA = pseudouridine(38/39/40) in tRNA. Formation of pseudouridine at positions 38, 39 and 40 in the anticodon stem and loop of transfer RNAs. In Pyrococcus furiosus (strain ATCC 43587 / DSM 3638 / JCM 8422 / Vc1), this protein is tRNA pseudouridine synthase A.